A 128-amino-acid polypeptide reads, in one-letter code: UPF0102 protein KPN78578_35270 (128 aa).

The disordered stretch occupies residues 1 to 20 (MAQVPAGKNRSGQLSKQTGD).

This sequence belongs to the UPF0102 family.

This Klebsiella pneumoniae subsp. pneumoniae (strain ATCC 700721 / MGH 78578) protein is UPF0102 protein KPN78578_35270.